The sequence spans 331 residues: DNA-directed RNA polymerase subunit alpha (331 aa).

The segment at 1–246 (MMQTSRTLHN…GLFSPLQEVS (246 aa)) is alpha N-terminal domain (alpha-NTD). The segment at 256–331 (AEDNQKNQIP…LTLPRERSKT (76 aa)) is alpha C-terminal domain (alpha-CTD).

It belongs to the RNA polymerase alpha chain family. As to quaternary structure, in cyanobacteria the RNAP catalytic core is composed of 2 alpha, 1 beta, 1 beta', 1 gamma and 1 omega subunit. When a sigma factor is associated with the core the holoenzyme is formed, which can initiate transcription.

The enzyme catalyses RNA(n) + a ribonucleoside 5'-triphosphate = RNA(n+1) + diphosphate. In terms of biological role, DNA-dependent RNA polymerase catalyzes the transcription of DNA into RNA using the four ribonucleoside triphosphates as substrates. This chain is DNA-directed RNA polymerase subunit alpha, found in Synechococcus sp. (strain JA-3-3Ab) (Cyanobacteria bacterium Yellowstone A-Prime).